The following is a 96-amino-acid chain: Cathelin (96 aa).

Gln-1 bears the Pyrrolidone carboxylic acid mark. Residues 31 to 50 (DQPPKADEDPGTPKPVSFTV) are disordered. Disulfide bonds link Cys-55-Cys-66 and Cys-73-Cys-90.

The protein belongs to the cathelicidin family.

The protein localises to the secreted. Its function is as follows. Probably a microbicidal peptide. This is Cathelin from Sus scrofa (Pig).